The sequence spans 361 residues: Cdc42 effector protein 1 (361 aa).

The tract at residues 1 to 29 (MPGPQGAGGAPAMNLGKLSPVGWVSSSQG) is disordered. 2 positions are modified to phosphoserine: Ser19 and Ser27. Position 34 is a phosphothreonine (Thr34). The CRIB domain occupies 38–52 (ISPPLGDFRHTMHVG). Ser39 is modified (phosphoserine). Arg53 bears the Omega-N-methylarginine mark. Ser65, Ser73, Ser77, Ser101, Ser113, Ser121, Ser139, Ser180, Ser190, Ser192, and Ser195 each carry phosphoserine. A disordered region spans residues 161–186 (CTISRLPRPEKPRDRDRDSSFPAEPE). Residues 167–186 (PRPEKPRDRDRDSSFPAEPE) show a composition bias toward basic and acidic residues. Disordered regions lie at residues 218–300 (EGSA…SRHH) and 320–361 (SWGS…EVKV). Tandem repeats lie at residues 220–226 (SAAETPA), 229–235 (PAASPPA), 236–242 (SVANPPA), and 243–249 (PASSPSL). The interval 220–249 (SAAETPAPAPAASPPASVANPPAPASSPSL) is 4 X 7 AA tandem repeats of [PT]-[AT]-A-[ENT]-[PT]-[PTS]-[AG]. Phosphoserine occurs at positions 270, 320, and 323. Residues 332–347 (QAGSRTPVPSTVQANT) are compositionally biased toward polar residues. Residues 351-361 (ADAEEDDEVKV) are compositionally biased toward acidic residues.

It belongs to the BORG/CEP family. Interacts with RHOQ and CDC42, in a GTP-dependent manner.

It is found in the endomembrane system. The protein localises to the cytoplasm. It localises to the cytoskeleton. Functionally, probably involved in the organization of the actin cytoskeleton. Induced membrane extensions in fibroblasts. The chain is Cdc42 effector protein 1 from Bos taurus (Bovine).